Reading from the N-terminus, the 37-residue chain is Photosystem I reaction center subunit VIII (37 aa).

A helical membrane pass occupies residues 7 to 27; it reads LPSIFVPLVGLVFPAIAMASL.

The protein belongs to the PsaI family.

The protein localises to the plastid. It localises to the chloroplast thylakoid membrane. May help in the organization of the PsaL subunit. In Populus alba (White poplar), this protein is Photosystem I reaction center subunit VIII.